The sequence spans 243 residues: Outer membrane protein A (243 aa).

The next 5 beta stranded transmembrane spans lie at 1–8 (LAAKLSYP), 13–21 (LDIYTRLGG), 48–57 (PLAAVGVEYA), 62–69 (WATRLDYQ), and 88–96 (MLSLGVSYR). Repeat copies occupy residues 104-105 (AP), 106-107 (AP), 108-109 (AP), 110-111 (AP), and 112-113 (AP). A 5 X 2 AA tandem repeats of A-P region spans residues 104–113 (APAPAPAPAP). An OmpA-like domain is found at 115-243 (VETKLFTLKS…RRVEIEVKGI (129 aa)). Cys-215 and Cys-229 are oxidised to a cystine.

Belongs to the outer membrane OOP (TC 1.B.6) superfamily. OmpA family. Monomer and homodimer.

The protein localises to the cell outer membrane. In terms of biological role, with TolR probably plays a role in maintaining the position of the peptidoglycan cell wall in the periplasm. Acts as a porin with low permeability that allows slow penetration of small solutes; an internal gate slows down solute passage. The chain is Outer membrane protein A from Serratia odorifera.